Here is a 238-residue protein sequence, read N- to C-terminus: Snake venom metalloproteinase HF-1 (238 aa).

A Peptidase M12B domain is found at 17-221 (RYIQLVVVAD…YNPQCILNKP (205 aa)). Asp106 contributes to the Ca(2+) binding site. 2 disulfide bridges follow: Cys130–Cys216 and Cys174–Cys181. A Zn(2+)-binding site is contributed by His158. Glu159 is an active-site residue. Residues His162 and His168 each contribute to the Zn(2+) site. Residues Cys216 and Asn219 each contribute to the Ca(2+) site.

In terms of assembly, monomer. Requires Zn(2+) as cofactor. As to expression, expressed by the venom gland.

It localises to the secreted. Inhibited by EDTA and EGTA. Inhibited by serum and antihemorrhagic factors Da2-I and Da2-II from D.albiventris. Not inhibited by PMSF or SBT-I. Snake venom zinc metalloprotease that is weakly hemorrhagic and has Aalpha, Bbeta fibrinogenolytic activities. Cleaves the Aalpha chain of fibrinogen first, followed by the Bbeta chain and shows no effect on the gamma chain. Has caseinolytic activity. Induces dose-dependent edema. The polypeptide is Snake venom metalloproteinase HF-1 (Bothrops marajoensis (Marajo lancehead)).